A 74-amino-acid polypeptide reads, in one-letter code: Conotoxin Bu4 (74 aa).

A signal peptide spans 1–22; the sequence is MKLTCVVIVAVLLLTACQLIIA. Residues 23-45 constitute a propeptide that is removed on maturation; sequence EDSRGTQLHRALRKATKLSVSTR. 3 disulfide bridges follow: cysteine 47–cysteine 63, cysteine 54–cysteine 66, and cysteine 62–cysteine 73.

It belongs to the conotoxin O1 superfamily. In terms of tissue distribution, expressed by the venom duct.

The protein localises to the secreted. This chain is Conotoxin Bu4, found in Conus bullatus (Bubble cone).